Reading from the N-terminus, the 472-residue chain is Keratin, type I cytoskeletal 14 (472 aa).

Residues 1–114 form a head region; the sequence is MTTCSRQFTS…AGGDGLLVGS (114 aa). Residues 115-150 are coil 1A; sequence EKVTMQNLNDRLASYLDKVRALEEANADLEVKIRDW. Residues 115–426 enclose the IF rod domain; that stretch reads EKVTMQNLND…RLLEGEDAHL (312 aa). Residues 151-168 form a linker 1 region; it reads YQRQRPAEIKDYSPYFKT. Positions 169-260 are coil 1B; that stretch reads IEDLRNKILT…KNHEEEMNAL (92 aa). The tract at residues 261–283 is linker 12; it reads RGQVGGDVNVEMDAAPGVDLSRI. A coil 2 region spans residues 284–422; the sequence is LNEMRDQYEK…ATYRRLLEGE (139 aa). The tract at residues 423-472 is tail; the sequence is DAHLSSSQFSSGSQSSRDVTSSSRQIRTKVMDVHDGKVVSTHEQVLRTKN. The interaction with Type I keratins and keratin filaments stretch occupies residues 425–472; the sequence is HLSSSQFSSGSQSSRDVTSSSRQIRTKVMDVHDGKVVSTHEQVLRTKN. The segment at 426–472 is disordered; that stretch reads LSSSQFSSGSQSSRDVTSSSRQIRTKVMDVHDGKVVSTHEQVLRTKN. Residues 427–445 show a composition bias toward low complexity; it reads SSSQFSSGSQSSRDVTSSS. Ser-435 carries the phosphoserine modification.

The protein belongs to the intermediate filament family. As to quaternary structure, heterotetramer of two type I and two type II keratins. Forms a disulfide-linked heterodimer (via 2B domains) with KRT5 (via 2B domains). Forms a heterodimer with KRT1; the interaction is more abundant in the absence of KRT5. Interacts with PLEC isoform 1C, when in a heterodimer with KRT5. Interacts with TRADD and with keratin filaments. Associates with other type I keratins. Interacts with EPPK1. Interacts with KLHL24. Interacts with PKP1 (via N-terminus) and PKP2. A disulfide bond is formed between rather than within filaments and promotes the formation of a keratin filament cage around the nucleus. In terms of processing, ubiquitinated by the BCR(KLHL24) E3 ubiquitin ligase complex. In terms of tissue distribution, expressed in the corneal epithelium (at protein level). Detected in the basal layer, lowered within the more apically located layers specifically in the stratum spinosum, stratum granulosum but is not detected in stratum corneum. Strongly expressed in the outer root sheath of anagen follicles but not in the germinative matrix, inner root sheath or hair. Found in keratinocytes surrounding the club hair during telogen.

It localises to the cytoplasm. The protein localises to the nucleus. Its function is as follows. The nonhelical tail domain is involved in promoting KRT5-KRT14 filaments to self-organize into large bundles and enhances the mechanical properties involved in resilience of keratin intermediate filaments in vitro. This chain is Keratin, type I cytoskeletal 14 (KRT14), found in Homo sapiens (Human).